We begin with the raw amino-acid sequence, 67 residues long: Beta-defensin 103 (67 aa).

An N-terminal signal peptide occupies residues 1–22 (MRIHYLLFALLFLFLVPVPGHG). 3 cysteine pairs are disulfide-bonded: Cys-33–Cys-62, Cys-40–Cys-55, and Cys-45–Cys-63.

Highly expressed in skin and tonsils, and to a lesser extent in trachea, uterus, kidney, thymus, adenoid, pharynx and tongue. Low expression in salivary gland, bone marrow, colon, stomach, polyp and larynx. No expression in small intestine.

It is found in the secreted. In terms of biological role, exhibits antimicrobial activity against Gram-positive bacteria S.aureus and S.pyogenes, Gram-negative bacteria P.aeruginosa and E.coli and the yeast C.albicans. Kills multiresistant S.aureus and vancomycin-resistant E.faecium. No significant hemolytic activity was observed. The sequence is that of Beta-defensin 103 (DEFB103A) from Homo sapiens (Human).